Consider the following 147-residue polypeptide: Large ribosomal subunit protein uL15 (147 aa).

The interval 1-45 (MRLEDLRPTPGAMKKRKRVGRGPGSGHGKTSGRGHKGQKARGSGK) is disordered. Positions 30 to 44 (TSGRGHKGQKARGSG) are enriched in basic residues.

Belongs to the universal ribosomal protein uL15 family. Part of the 50S ribosomal subunit.

Binds to the 23S rRNA. This Thermotoga sp. (strain RQ2) protein is Large ribosomal subunit protein uL15.